A 221-amino-acid chain; its full sequence is UPF0502 protein PA14_19450 (221 aa).

The protein belongs to the UPF0502 family.

The chain is UPF0502 protein PA14_19450 from Pseudomonas aeruginosa (strain UCBPP-PA14).